The following is a 159-amino-acid chain: Mating-type P-specific polypeptide Pi (159 aa).

Residues 103–159 (MTTVRGQCSKCTKPHLMRWLLLHYDNPYPSNSEFYDLSAATGLTRTQLRNWFSNRRR) constitute a DNA-binding region (homeobox; TALE-type; partial).

The protein belongs to the TALE/M-ATYP homeobox family.

Its subcellular location is the nucleus. In terms of biological role, mating type proteins are sequence specific DNA-binding proteins that act as master switches in yeast differentiation by controlling gene expression in a cell type-specific fashion. Required for meiosis, but plays no role in conjugation. The chain is Mating-type P-specific polypeptide Pi (matPi) from Schizosaccharomyces kambucha (Fission yeast).